Consider the following 403-residue polypeptide: Lissencephaly-1 homolog 1 (403 aa).

A LisH domain is found at 7–38 (QRDELNQAIHQYLLISYQQSAQLFKTEAAVKD). A coiled-coil region spans residues 51 to 87 (NSIVRLSKRVITLEQQVEQLNEQLAQAQAGKIQFNKS). WD repeat units lie at residues 103-142 (GHRA…FEKT), 145-184 (GHTS…CVKT), 187-226 (GHEH…CKKT), 229-270 (EHQE…HQLS), 271-327 (GHEH…NLFT), 330-369 (GHDN…QKKK), and 373-403 (AHDK…WLLS).

Belongs to the WD repeat LIS1/nudF family.

Its subcellular location is the cytoplasm. The protein resides in the cytoskeleton. The protein localises to the microtubule organizing center. It localises to the centrosome. Functionally, positively regulates the activity of the minus-end directed microtubule motor protein dynein. May enhance dynein-mediated microtubule sliding by targeting dynein to the microtubule plus end. Required for several dynein- and microtubule-dependent processes. In Paramecium tetraurelia, this protein is Lissencephaly-1 homolog 1.